A 537-amino-acid polypeptide reads, in one-letter code: Probable glucomannan 4-beta-mannosyltransferase 15 (537 aa).

The chain crosses the membrane as a helical span at residues 50 to 70 (FIVPLFKCIVVMCLIISLLVF). Asp150 is an active-site residue. The substrate site is built by Asp209 and Asp211. Asp303 is a catalytic residue. Helical transmembrane passes span 382-402 (IVVHFFTYFFYCVILPTSVFL), 418-438 (VITLLSAIATPRSFYLVIFWV), 494-514 (EMMMGIYILCCACYDFAFGNA), and 515-535 (FLYLYLFMQATAFLISGVGFV).

It belongs to the glycosyltransferase 2 family. Plant cellulose synthase-like A subfamily.

Its subcellular location is the golgi apparatus membrane. It carries out the reaction GDP-mannose + (glucomannan)n = GDP + (glucomannan)n+1.. Its function is as follows. Probable mannan synthase which consists of a 4-beta-mannosyltransferase activity on mannan using GDP-mannose. The beta-1,4-mannan product is the backbone for galactomannan synthesis by galactomannan galactosyltransferase. Galactomannan is a noncellulosic polysaccharides of plant cell wall. In Arabidopsis thaliana (Mouse-ear cress), this protein is Probable glucomannan 4-beta-mannosyltransferase 15.